Reading from the N-terminus, the 273-residue chain is Tryptase (273 aa).

The first 18 residues, 1 to 18 (MLKLLLLTLPLLSSLVHA), serve as a signal peptide directing secretion. Residues 19–28 (APSLAMPREG) constitute a propeptide, activation peptide. In terms of domain architecture, Peptidase S1 spans 29-270 (IVGGQEASGN…YLDWIYRYVP (242 aa)). The N-linked (GlcNAc...) asparagine glycan is linked to asparagine 49. A disulfide bridge connects residues cysteine 57 and cysteine 73. Residues histidine 72 and aspartate 119 each act as charge relay system in the active site. Disulfide bonds link cysteine 153-cysteine 228, cysteine 186-cysteine 209, and cysteine 218-cysteine 246. The active-site Charge relay system is the serine 222.

The protein belongs to the peptidase S1 family. Tryptase subfamily. Homotetramer. Glycosylated. Mast cells.

Its subcellular location is the secreted. It catalyses the reaction Preferential cleavage: Arg-|-Xaa, Lys-|-Xaa, but with more restricted specificity than trypsin.. In terms of biological role, tryptase is the major neutral protease present in mast cells and is secreted upon the coupled activation-degranulation response of this cell type. May play a role in innate immunity. The chain is Tryptase (Tpsab1) from Rattus norvegicus (Rat).